The primary structure comprises 398 residues: Arylacetamide deacetylase (398 aa).

Over 1 to 5 the chain is Cytoplasmic; sequence MGRTI. The chain crosses the membrane as a helical; Signal-anchor for type II membrane protein span at residues 6–26; the sequence is FLLISVVLVAYYIYIPLPDDI. Topologically, residues 27–398 are lumenal; sequence EEPWKIILGN…QYLNWLHKNL (372 aa). N77 carries an N-linked (GlcNAc...) asparagine glycan. Positions 110-112 match the Involved in the stabilization of the negatively charged intermediate by the formation of the oxyanion hole motif; it reads HGG. A disulfide bond links C115 and C339. S188 is an active-site residue. N192, N281, and N324 each carry an N-linked (GlcNAc...) asparagine glycan. Residues D342 and H372 contribute to the active site.

The protein belongs to the 'GDXG' lipolytic enzyme family. As to expression, highest levels in liver with lower levels in jejunum, kidney and testis.

The protein resides in the endoplasmic reticulum membrane. It localises to the microsome membrane. It carries out the reaction a triacylglycerol + H2O = a diacylglycerol + a fatty acid + H(+). Its function is as follows. Displays cellular triglyceride lipase activity in liver, increases the levels of intracellular fatty acids derived from the hydrolysis of newly formed triglyceride stores and plays a role in very low-density lipoprotein assembly. Displays serine esterase activity in liver. Deacetylates a variety of arylacetamide substrates, including xenobiotic compounds and procarcinogens, converting them to the primary arylamide compounds and increasing their toxicity. This chain is Arylacetamide deacetylase (Aadac), found in Rattus norvegicus (Rat).